Reading from the N-terminus, the 278-residue chain is Cyclin-C (278 aa).

The Cyclin N-terminal domain maps to 41 to 139 (NVIQALGEHL…ILECEFYLLE (99 aa)). The tract at residues 247–278 (TILSKMPKPKPPPNSEGEQGPNGSQNSSYSQS) is disordered. Polar residues predominate over residues 267-278 (PNGSQNSSYSQS). At serine 270 the chain carries Phosphoserine.

The protein belongs to the cyclin family. Cyclin C subfamily. In terms of assembly, component of the Mediator complex, which is composed of MED1, MED4, MED6, MED7, MED8, MED9, MED10, MED11, MED12, MED13, MED13L, MED14, MED15, MED16, MED17, MED18, MED19, MED20, MED21, MED22, MED23, MED24, MED25, MED26, MED27, MED29, MED30, MED31, CCNC, CDK8 and CDC2L6/CDK11. The MED12, MED13, CCNC and CDK8 subunits form a distinct module termed the CDK8 module. Mediator containing the CDK8 module is less active than Mediator lacking this module in supporting transcriptional activation. Individual preparations of the Mediator complex lacking one or more distinct subunits have been variously termed ARC, CRSP, DRIP, PC2, SMCC and TRAP. The cylin/CDK pair formed by CCNC/CDK8 also associates with the large subunit of RNA polymerase II.

The protein resides in the nucleus. Component of the Mediator complex, a coactivator involved in regulated gene transcription of nearly all RNA polymerase II-dependent genes. Mediator functions as a bridge to convey information from gene-specific regulatory proteins to the basal RNA polymerase II transcription machinery. Mediator is recruited to promoters by direct interactions with regulatory proteins and serves as a scaffold for the assembly of a functional preinitiation complex with RNA polymerase II and the general transcription factors. Binds to and activates cyclin-dependent kinase CDK8 that phosphorylates the CTD (C-terminal domain) of the large subunit of RNA polymerase II (RNAp II), which may inhibit the formation of a transcription initiation complex. In Rattus norvegicus (Rat), this protein is Cyclin-C (Ccnc).